Reading from the N-terminus, the 453-residue chain is Malate dehydrogenase [NADP], chloroplastic (453 aa).

The N-terminal 68 residues, 1-68 (MAVVKLSPWA…RLSSPASIRC (68 aa)), are a transit peptide targeting the chloroplast. The cysteines at positions 88 and 93 are disulfide-linked. Position 117–123 (117–123 (GAAGMIS)) interacts with NADP(+). Substrate contacts are provided by R198 and R204. NADP(+)-binding positions include N211, Q218, and 235–237 (VGN). Substrate contacts are provided by N237 and R268. H293 functions as the Proton acceptor in the catalytic mechanism. Cysteines 429 and 441 form a disulfide.

The protein belongs to the LDH/MDH superfamily. MDH type 2 family. As to quaternary structure, homodimer.

It is found in the plastid. The protein resides in the chloroplast. The catalysed reaction is (S)-malate + NADP(+) = oxaloacetate + NADPH + H(+). With respect to regulation, chloroplast NADP-MDH is activated upon illumination. In order to be enzymatically active, disulfide bridges on the protein must be reduced by thioredoxin which receives electrons from ferredoxin and the electron transport system of photosynthesis. In terms of biological role, the chloroplastic, NADP-dependent form is essential for the photosynthesis C4 cycle, which allows plants to circumvent the problem of photorespiration. In C4 plants, NADP-MDH activity acts to convert oxaloacetate to malate in chloroplasts of mesophyll cells for transport to the bundle sheath cells. The sequence is that of Malate dehydrogenase [NADP], chloroplastic from Flaveria bidentis (Coastal plain yellowtops).